Consider the following 155-residue polypeptide: Small ribosomal subunit protein uS7 (155 aa).

This sequence belongs to the universal ribosomal protein uS7 family. As to quaternary structure, part of the 30S ribosomal subunit. Contacts proteins S9 and S11.

Its function is as follows. One of the primary rRNA binding proteins, it binds directly to 16S rRNA where it nucleates assembly of the head domain of the 30S subunit. Is located at the subunit interface close to the decoding center, probably blocks exit of the E-site tRNA. The chain is Small ribosomal subunit protein uS7 from Thermotoga petrophila (strain ATCC BAA-488 / DSM 13995 / JCM 10881 / RKU-1).